Consider the following 227-residue polypeptide: Cytochrome c oxidase subunit 2 (227 aa).

The Mitochondrial intermembrane segment spans residues 1-14 (MAYPFQLGLQDATS). Residues 15-45 (PIMEELMNFHDHTLMIVFLISSLVLYIISLM) form a helical membrane-spanning segment. Residues 46–59 (LTTKLTHTSTMDAQ) lie on the Mitochondrial matrix side of the membrane. The helical transmembrane segment at 60 to 87 (EVETIWTILPAAILILIALPSLRILYMM) threads the bilayer. Over 88–227 (DEINNPVLTV…YFENWSASMI (140 aa)) the chain is Mitochondrial intermembrane. Cu cation-binding residues include His-161, Cys-196, Glu-198, Cys-200, His-204, and Met-207. Glu-198 is a Mg(2+) binding site.

The protein belongs to the cytochrome c oxidase subunit 2 family. In terms of assembly, component of the cytochrome c oxidase (complex IV, CIV), a multisubunit enzyme composed of 14 subunits. The complex is composed of a catalytic core of 3 subunits MT-CO1, MT-CO2 and MT-CO3, encoded in the mitochondrial DNA, and 11 supernumerary subunits COX4I, COX5A, COX5B, COX6A, COX6B, COX6C, COX7A, COX7B, COX7C, COX8 and NDUFA4, which are encoded in the nuclear genome. The complex exists as a monomer or a dimer and forms supercomplexes (SCs) in the inner mitochondrial membrane with NADH-ubiquinone oxidoreductase (complex I, CI) and ubiquinol-cytochrome c oxidoreductase (cytochrome b-c1 complex, complex III, CIII), resulting in different assemblies (supercomplex SCI(1)III(2)IV(1) and megacomplex MCI(2)III(2)IV(2)). Found in a complex with TMEM177, COA6, COX18, COX20, SCO1 and SCO2. Interacts with TMEM177 in a COX20-dependent manner. Interacts with COX20. Interacts with COX16. It depends on Cu cation as a cofactor.

The protein localises to the mitochondrion inner membrane. It catalyses the reaction 4 Fe(II)-[cytochrome c] + O2 + 8 H(+)(in) = 4 Fe(III)-[cytochrome c] + 2 H2O + 4 H(+)(out). Component of the cytochrome c oxidase, the last enzyme in the mitochondrial electron transport chain which drives oxidative phosphorylation. The respiratory chain contains 3 multisubunit complexes succinate dehydrogenase (complex II, CII), ubiquinol-cytochrome c oxidoreductase (cytochrome b-c1 complex, complex III, CIII) and cytochrome c oxidase (complex IV, CIV), that cooperate to transfer electrons derived from NADH and succinate to molecular oxygen, creating an electrochemical gradient over the inner membrane that drives transmembrane transport and the ATP synthase. Cytochrome c oxidase is the component of the respiratory chain that catalyzes the reduction of oxygen to water. Electrons originating from reduced cytochrome c in the intermembrane space (IMS) are transferred via the dinuclear copper A center (CU(A)) of subunit 2 and heme A of subunit 1 to the active site in subunit 1, a binuclear center (BNC) formed by heme A3 and copper B (CU(B)). The BNC reduces molecular oxygen to 2 water molecules using 4 electrons from cytochrome c in the IMS and 4 protons from the mitochondrial matrix. This is Cytochrome c oxidase subunit 2 (MT-CO2) from Leggadina forresti (Forrest's mouse).